The sequence spans 143 residues: Transcriptional regulator MraZ (143 aa).

SpoVT-AbrB domains lie at 5–47 and 76–119; these read TYAP…SQRE and ASAE…DAEA.

The protein belongs to the MraZ family. In terms of assembly, forms oligomers.

The protein localises to the cytoplasm. It localises to the nucleoid. The protein is Transcriptional regulator MraZ of Leifsonia xyli subsp. xyli (strain CTCB07).